An 832-amino-acid polypeptide reads, in one-letter code: Mechanosensitive cation channel TMEM63B (832 aa).

Over 1 to 40 (MLPFLLATLGTTALNNSNPKDYCYSARIRSTVLQGLPFGG) the chain is Extracellular. Residues 41–65 (VPTVLALDFMCFLALLFLFSILRKV) form a helical membrane-spanning segment. A lipid anchor (S-palmitoyl cysteine) is attached at cysteine 51. At 66–145 (AWDYGRLALV…KDDEIRDKCG (80 aa)) the chain is on the cytoplasmic side. A Mediates endoplasmic reticulum retention motif is present at residues 86-88 (RDR). Phosphoserine occurs at positions 111, 113, 114, and 115. Cysteine 126 carries the S-palmitoyl cysteine lipid modification. A helical transmembrane segment spans residues 146–178 (GDAVHYLSFQRHIIGLLVVVGVLSVGIVLPVNF). Residues 179–202 (SGDLLENNAYSFGRTTIANLKSGN) lie on the Extracellular side of the membrane. The helical transmembrane segment at 203–227 (NLLWLHTSFAFLYLLLTVYSMRRHT) threads the bilayer. Residues 228–427 (SKMRYKEDDL…IYWEHLSIRG (200 aa)) are Cytoplasmic-facing. An intracellular linker IL2; confers mechanosensitivity region spans residues 231–426 (RYKEDDLVKR…NIYWEHLSIR (196 aa)). S-palmitoyl cysteine attachment occurs at residues cysteine 382 and cysteine 398. The chain crosses the membrane as a helical span at residues 428 to 457 (FIWWLRCLVINVVLFILLFFLTTPAIIITT). At 458 to 472 (MDKFNVTKPVEYLNN) the chain is on the extracellular side. The N-linked (GlcNAc...) asparagine glycan is linked to asparagine 462. Residues 473–502 (PIITQFFPTLLLWCFSALLPTIVYYSAFFE) traverse the membrane as a helical segment. Topologically, residues 503-506 (AHWT) are cytoplasmic. A helical transmembrane segment spans residues 507–543 (RSGENRTTMHKCYTFLIFMVLLLPSLGLSSLDLFFRW). At 544–566 (LFDKKFLAEAAIRFECVFLPDNG) the chain is on the extracellular side. The chain crosses the membrane as a helical span at residues 567–599 (AFFVNYVIASAFIGNAMDLLRIPGLLMYMIRLC). Residues 567 to 599 (AFFVNYVIASAFIGNAMDLLRIPGLLMYMIRLC) are gating helix. The Cytoplasmic portion of the chain corresponds to 600-619 (LARSAAERRNVKRHQAYEFQ). The chain crosses the membrane as a helical span at residues 620-638 (FGAAYAWMMCVFTVVMTYS). At 639 to 641 (ITC) the chain is on the extracellular side. The helical transmembrane segment at 642 to 666 (PIIVPFGLMYMLLKHLVDRYNLYYA) threads the bilayer. Over 667–673 (YLPAKLD) the chain is Cytoplasmic. The chain crosses the membrane as a helical span at residues 674-702 (KKIHSGAVNQVVAAPILCLFWLLFFSTMR). The Extracellular segment spans residues 703–707 (TGFLA). The helical transmembrane segment at 708-728 (PTSMFTFVVLVITIVICLCHV) threads the bilayer. 2 S-palmitoyl cysteine lipidation sites follow: cysteine 726 and cysteine 729. The Cytoplasmic portion of the chain corresponds to 729-832 (CFGHFKYLSA…DSLIENEIHQ (104 aa)). The interval 780-814 (EVDGDGDGAPGSSGDEPPSSSSQDEELLMPPDALT) is disordered. Residues 789–801 (PGSSGDEPPSSSS) are compositionally biased toward low complexity.

It belongs to the CSC1 (TC 1.A.17) family. In terms of assembly, monomer. Interacts with SLC19A2; interaction is required for the phospholipid scramblase activity. In terms of processing, palmitoylation is required for localization to the plasma membrane and stability. N-Glycosylated.

It is found in the cell membrane. It localises to the endoplasmic reticulum membrane. The protein resides in the lysosome membrane. Its subcellular location is the early endosome membrane. The catalysed reaction is Ca(2+)(in) = Ca(2+)(out). It catalyses the reaction Mg(2+)(in) = Mg(2+)(out). The enzyme catalyses K(+)(in) = K(+)(out). It carries out the reaction Na(+)(in) = Na(+)(out). The catalysed reaction is Cs(+)(in) = Cs(+)(out). It catalyses the reaction a 1,2-diacyl-sn-glycero-3-phosphocholine(in) = a 1,2-diacyl-sn-glycero-3-phosphocholine(out). The enzyme catalyses a sphingomyelin(in) = a sphingomyelin(out). Mechanosensitive cation channel with low conductance and high activation threshold. Osmosensitive cation channel preferentially activated by hypotonic stress. Also acts as a phospholipid scramblase in response to changes in membrane structure: upon changes in membrane curvature and thickness, alters its conformation and translocates phospholipids, such as phosphatidylcholine and sphingomyelin, thereby controlling plasma membrane lipid distribution. Forms a heterodimer with SLC19A2, which mediates phospholipid scramblase activity following Ca(2+) stimulation. Expressed in excitatory neurons of the subfornical organ and functions as a thirst receptor that mediates neuronal response to hyperosmolality to drive thirst and drinking behavior. Facilitates intestinal motility by promoting proliferation of intestinal stem cells. Essential for the baby's first breath and respiration throughout life. Upon lung inflation conducts cation currents in alveolar type 1 and 2 cells triggering lamellar body exocytosis and surfactant secretion into airspace. Acts as an osmosensor in cochlear outer hair cells (OHCs) where it mediates calcium influx and regulatory volume decrease response. Required for the maintenance of OHC morphology, OHC survival and normal hearing. This Homo sapiens (Human) protein is Mechanosensitive cation channel TMEM63B.